We begin with the raw amino-acid sequence, 381 residues long: S-(hydroxymethyl)glutathione dehydrogenase (381 aa).

C49 serves as a coordination point for Zn(2+). H50 is a binding site for NAD(+). Zn(2+)-binding residues include H71, E72, C101, C104, C107, C115, and C178. Residues 203–208 (GGGIVG), D227, and 298–300 (IGV) contribute to the NAD(+) site.

It belongs to the zinc-containing alcohol dehydrogenase family. Class-III subfamily. Zn(2+) serves as cofactor.

The catalysed reaction is a primary alcohol + NAD(+) = an aldehyde + NADH + H(+). It catalyses the reaction a secondary alcohol + NAD(+) = a ketone + NADH + H(+). It carries out the reaction S-(hydroxymethyl)glutathione + NADP(+) = S-formylglutathione + NADPH + H(+). The enzyme catalyses S-(hydroxymethyl)glutathione + NAD(+) = S-formylglutathione + NADH + H(+). The catalysed reaction is S-nitrosoglutathione + NADH + H(+) = S-(hydroxysulfenamide)glutathione + NAD(+). Functionally, oxidizes long-chain alcohols and, in the presence of glutathione, is able to oxidize formaldehyde. Also acts as a S-nitroso-glutathione reductase by catalyzing the NADH-dependent reduction of S-nitrosoglutathione, thereby regulating protein S-nitrosylation. The polypeptide is S-(hydroxymethyl)glutathione dehydrogenase (FDH1) (Candida maltosa (Yeast)).